The chain runs to 92 residues: DNA-binding protein HU 1 (92 aa).

At T4 the chain carries Phosphothreonine.

This sequence belongs to the bacterial histone-like protein family. In terms of assembly, homodimer. As to quaternary structure, (Microbial infection) Interacts with Bacillus phage SP01 Gp46; the interaction replaces dsDNA from the hbs-DNA complex.

It is found in the cytoplasm. It localises to the nucleoid. Its function is as follows. Histone-like DNA-binding protein which introduces negative supercoils in relaxed plasmid DNA in the presence of topoisomerase I. There are at least 20,000 monomers/cell. Capable of wrapping DNA to stabilize it, and thus to prevent its denaturation under extreme environmental conditions. Binds evenly across chromosome, does not display a preference for AT content. Binds ss- and dsDNA in a sequence non-specific manner; 8 nucleotides are sufficient to bind protein. The polypeptide is DNA-binding protein HU 1 (Bacillus subtilis (strain 168)).